The sequence spans 251 residues: MSDYVYELMKQHHSVRKFKNQPLGSETVEKLVEAGQSASTSSYLQTYSIIGVEDPSIKARLKEVSGQPYVLDNGYLFVFVLDYYRHHLVDEVAASNMETSYGSAEGLLVGTIDVALVAQNMAVAAEDMGYGIVYLGSLRNDVARVREILNLPDYTFPLFGMAVGEPSDEENGSPKPRLPFKHIFHKDQYDANQHQQRKELEAYDQVVSEYYKERTNGVRTENWSQQIETFLGRKTRLDMLDELKKAGFIKR.

Belongs to the flavin oxidoreductase frp family. FMN is required as a cofactor.

In terms of biological role, reduces FMN, organic nitro compounds and disulfide DTNB. Involved in maintenance of the cellular redox state and the disulfide stress response. The chain is NADPH-dependent oxidoreductase (nfrA) from Staphylococcus epidermidis (strain ATCC 12228 / FDA PCI 1200).